The chain runs to 332 residues: Ketol-acid reductoisomerase (NADP(+)) (332 aa).

Residues 5–185 (VKVYYDDEVS…GCTRAGVIET (181 aa)) enclose the KARI N-terminal Rossmann domain. NADP(+) is bound by residues 28-31 (YGNQ), Arg51, Ser56, and 86-89 (DLVQ). His111 is a catalytic residue. An NADP(+)-binding site is contributed by Gly137. The KARI C-terminal knotted domain occupies 186-331 (TFKDETESDL…RFIRKMSGLE (146 aa)). Residues Asp194, Glu198, Glu230, and Glu234 each contribute to the Mg(2+) site. Substrate is bound at residue Ser255.

Belongs to the ketol-acid reductoisomerase family. The cofactor is Mg(2+).

It carries out the reaction (2R)-2,3-dihydroxy-3-methylbutanoate + NADP(+) = (2S)-2-acetolactate + NADPH + H(+). The enzyme catalyses (2R,3R)-2,3-dihydroxy-3-methylpentanoate + NADP(+) = (S)-2-ethyl-2-hydroxy-3-oxobutanoate + NADPH + H(+). Its pathway is amino-acid biosynthesis; L-isoleucine biosynthesis; L-isoleucine from 2-oxobutanoate: step 2/4. The protein operates within amino-acid biosynthesis; L-valine biosynthesis; L-valine from pyruvate: step 2/4. In terms of biological role, involved in the biosynthesis of branched-chain amino acids (BCAA). Catalyzes an alkyl-migration followed by a ketol-acid reduction of (S)-2-acetolactate (S2AL) to yield (R)-2,3-dihydroxy-isovalerate. In the isomerase reaction, S2AL is rearranged via a Mg-dependent methyl migration to produce 3-hydroxy-3-methyl-2-ketobutyrate (HMKB). In the reductase reaction, this 2-ketoacid undergoes a metal-dependent reduction by NADPH to yield (R)-2,3-dihydroxy-isovalerate. The sequence is that of Ketol-acid reductoisomerase (NADP(+)) from Pyrococcus abyssi (strain GE5 / Orsay).